The sequence spans 250 residues: Ubiquinone/menaquinone biosynthesis C-methyltransferase UbiE (250 aa).

Residues threonine 73, aspartate 94, 122 to 123, and serine 139 contribute to the S-adenosyl-L-methionine site; that span reads NA.

It belongs to the class I-like SAM-binding methyltransferase superfamily. MenG/UbiE family.

The enzyme catalyses a 2-demethylmenaquinol + S-adenosyl-L-methionine = a menaquinol + S-adenosyl-L-homocysteine + H(+). The catalysed reaction is a 2-methoxy-6-(all-trans-polyprenyl)benzene-1,4-diol + S-adenosyl-L-methionine = a 5-methoxy-2-methyl-3-(all-trans-polyprenyl)benzene-1,4-diol + S-adenosyl-L-homocysteine + H(+). It functions in the pathway quinol/quinone metabolism; menaquinone biosynthesis; menaquinol from 1,4-dihydroxy-2-naphthoate: step 2/2. It participates in cofactor biosynthesis; ubiquinone biosynthesis. In terms of biological role, methyltransferase required for the conversion of demethylmenaquinol (DMKH2) to menaquinol (MKH2) and the conversion of 2-polyprenyl-6-methoxy-1,4-benzoquinol (DDMQH2) to 2-polyprenyl-3-methyl-6-methoxy-1,4-benzoquinol (DMQH2). The sequence is that of Ubiquinone/menaquinone biosynthesis C-methyltransferase UbiE from Francisella tularensis subsp. holarctica (strain FTNF002-00 / FTA).